Here is a 193-residue protein sequence, read N- to C-terminus: Large ribosomal subunit protein bL25 (193 aa).

This sequence belongs to the bacterial ribosomal protein bL25 family. CTC subfamily. As to quaternary structure, part of the 50S ribosomal subunit; part of the 5S rRNA/L5/L18/L25 subcomplex. Contacts the 5S rRNA. Binds to the 5S rRNA independently of L5 and L18.

This is one of the proteins that binds to the 5S RNA in the ribosome where it forms part of the central protuberance. The protein is Large ribosomal subunit protein bL25 of Lachnoclostridium phytofermentans (strain ATCC 700394 / DSM 18823 / ISDg) (Clostridium phytofermentans).